The primary structure comprises 500 residues: Probable cytosol aminopeptidase (500 aa).

Mn(2+) is bound by residues Lys264 and Asp269. Lys276 is an active-site residue. Mn(2+) contacts are provided by Asp287, Asp346, and Glu348. The active site involves Arg350.

It belongs to the peptidase M17 family. It depends on Mn(2+) as a cofactor.

The protein resides in the cytoplasm. The catalysed reaction is Release of an N-terminal amino acid, Xaa-|-Yaa-, in which Xaa is preferably Leu, but may be other amino acids including Pro although not Arg or Lys, and Yaa may be Pro. Amino acid amides and methyl esters are also readily hydrolyzed, but rates on arylamides are exceedingly low.. The enzyme catalyses Release of an N-terminal amino acid, preferentially leucine, but not glutamic or aspartic acids.. Presumably involved in the processing and regular turnover of intracellular proteins. Catalyzes the removal of unsubstituted N-terminal amino acids from various peptides. This is Probable cytosol aminopeptidase from Rhodopseudomonas palustris (strain BisB5).